Reading from the N-terminus, the 450-residue chain is UDP-N-acetylmuramoylalanine--D-glutamate ligase (450 aa).

An ATP-binding site is contributed by glycine 119–threonine 125.

The protein belongs to the MurCDEF family.

It localises to the cytoplasm. The catalysed reaction is UDP-N-acetyl-alpha-D-muramoyl-L-alanine + D-glutamate + ATP = UDP-N-acetyl-alpha-D-muramoyl-L-alanyl-D-glutamate + ADP + phosphate + H(+). It participates in cell wall biogenesis; peptidoglycan biosynthesis. Functionally, cell wall formation. Catalyzes the addition of glutamate to the nucleotide precursor UDP-N-acetylmuramoyl-L-alanine (UMA). This is UDP-N-acetylmuramoylalanine--D-glutamate ligase from Streptococcus sanguinis (strain SK36).